The sequence spans 430 residues: MMRRLSTQDQSFKQVFADLLAFETVNDPELLKTVDQIIADVRQYGDEHVLKLTQQFDRHPAHQFSDLELTQEQLKTAFEALTAEIREALELAAERIRSFHQAQKQEGWSYVDALGNTLGQKVTPLDRVGIYVPGGLASYPSSVLMNAIPAHVAGVPEIIMVVPAPNGELNSLVLAAAYLAGVSRIFTIGGAQAVAALAYGTQTIPAVDKITGPGNRFVAAAKRAVFGQVGIDMIAGPSEILVYAEGQNNAKWLAMDLLSQAEHDTVAQAIFITPDEALLDEVAQAIEEHLAALPKADIARTSIANRGALVLVKDRDEAIELINQVAPEHLELCLDESEAMSQKIRHAGAIFMGRYTPEAIGDYCAGPNHVLPTSGTARFSSPLGVYDFQKRSSLIMCSQEGVKSLAKAADVLAQQENLDAHARSARYRYQ.

The NAD(+) site is built by Tyr-131, Gln-192, and Asn-215. Ser-238, Gln-260, and His-263 together coordinate substrate. Residues Gln-260 and His-263 each coordinate Zn(2+). Active-site proton acceptor residues include Glu-328 and His-329. Substrate-binding residues include His-329, Asp-362, Glu-416, and His-421. Asp-362 lines the Zn(2+) pocket. Residue His-421 coordinates Zn(2+).

The protein belongs to the histidinol dehydrogenase family. Zn(2+) is required as a cofactor.

It catalyses the reaction L-histidinol + 2 NAD(+) + H2O = L-histidine + 2 NADH + 3 H(+). The protein operates within amino-acid biosynthesis; L-histidine biosynthesis; L-histidine from 5-phospho-alpha-D-ribose 1-diphosphate: step 9/9. Functionally, catalyzes the sequential NAD-dependent oxidations of L-histidinol to L-histidinaldehyde and then to L-histidine. The chain is Histidinol dehydrogenase from Acinetobacter baylyi (strain ATCC 33305 / BD413 / ADP1).